Here is a 560-residue protein sequence, read N- to C-terminus: Eukaryotic translation initiation factor 3 subunit D-1 (560 aa).

A disordered region spans residues 98–166; sequence VQKPPHQRGR…RGPPPKMRES (69 aa). The span at 100–121 shows a compositional bias: basic residues; sequence KPPHQRGRFRNMRNSRSGRGRN. Residue Thr-128 is modified to Phosphothreonine. Basic residues predominate over residues 147-156; it reads GRGMGKKFGH. The interval 291–305 is RNA gate; sequence EFDLLTVNESSVEPP.

It belongs to the eIF-3 subunit D family. In terms of assembly, component of the eukaryotic translation initiation factor 3 (eIF-3) complex. The eIF-3 complex interacts with pix.

The protein localises to the cytoplasm. Functionally, mRNA cap-binding component of the eukaryotic translation initiation factor 3 (eIF-3) complex, which is involved in protein synthesis of a specialized repertoire of mRNAs and, together with other initiation factors, stimulates binding of mRNA and methionyl-tRNAi to the 40S ribosome. The eIF-3 complex specifically targets and initiates translation of a subset of mRNAs involved in cell proliferation. In the eIF-3 complex, eif3d specifically recognizes and binds the 7-methylguanosine cap of a subset of mRNAs. This Drosophila yakuba (Fruit fly) protein is Eukaryotic translation initiation factor 3 subunit D-1.